The sequence spans 177 residues: ATP-dependent protease subunit HslV (177 aa).

Threonine 2 is an active-site residue. Glycine 158, cysteine 161, and threonine 164 together coordinate Na(+).

The protein belongs to the peptidase T1B family. HslV subfamily. As to quaternary structure, a double ring-shaped homohexamer of HslV is capped on each side by a ring-shaped HslU homohexamer. The assembly of the HslU/HslV complex is dependent on binding of ATP.

The protein resides in the cytoplasm. It catalyses the reaction ATP-dependent cleavage of peptide bonds with broad specificity.. Its activity is regulated as follows. Allosterically activated by HslU binding. In terms of biological role, protease subunit of a proteasome-like degradation complex believed to be a general protein degrading machinery. The polypeptide is ATP-dependent protease subunit HslV (Pseudomonas aeruginosa (strain LESB58)).